A 186-amino-acid polypeptide reads, in one-letter code: dCTP deaminase (186 aa).

107 to 112 (KSTYAR) is a binding site for dCTP. E133 functions as the Proton donor/acceptor in the catalytic mechanism. DCTP is bound by residues Q152, Y166, and Q176.

Belongs to the dCTP deaminase family. As to quaternary structure, homotrimer.

The enzyme catalyses dCTP + H2O + H(+) = dUTP + NH4(+). The protein operates within pyrimidine metabolism; dUMP biosynthesis; dUMP from dCTP (dUTP route): step 1/2. Catalyzes the deamination of dCTP to dUTP. In Campylobacter curvus (strain 525.92), this protein is dCTP deaminase.